A 719-amino-acid polypeptide reads, in one-letter code: MSQITPDVVAAHGLSEEEYQRVLHALGREPNLVELGIFSVMWSEHCSYKSSRIHLKKLPTSAPWVICGPGENAGVIDIGDGQAAIFKMESHNHPSYIEPYQGAATGVGGILRDVFTMGARPVANMNALRFGRPDHPKMKHLVQGVVAGIGGYGNCVGVPTVGGETNFHKAYDGNILVNAMTVGVADTDKIFYSAATGLGNPIVYVGSKTGRDGIHGATMASADFDEKSDEKRPTVQVGDPFTEKLLIEACLELMATDAIVAIQDMGAAGLTSSSVEMATNGKAGIILDMDKVPCREEGMTPYEMMLSESQERMLMVLKPGKEAMAEAIFRKWELDFAVIGEVTDTGHMVLKFQGETVCDIPLGPLAEDAPLYDRPALSLADYKAWANVAPLGTVPESTDLGADLVKLIGCPDLANRRWIFEQYDSQVGADTLQKSGGDAAVVRIHGTSKALAISTDCTPRYCYADPYEGGKQAVAETWRNICAVGARPLAITNCLNFANPQRPEIMAQIVQALNGMGDACRALDYPIVSGNVSLYNESKATGGGSAILPTPAIGGVGLMLDHEVMTTVAFKDEGDAIWLVGGEGTHLGQSLYLREIHGREDGDAPSVDLAVERRNGEQVREWIAAGRLSAVHDISDGGLLVALTEMALAGNKGCTLDIALTTAAAFGEDQSRYVVTTRAGEVLEGATRLGTVGGSQVAGVELAALREANEAFFRDWMEG.

Residue histidine 45 is part of the active site. The ATP site is built by tyrosine 48 and lysine 87. Glutamate 89 is a binding site for Mg(2+). Substrate-binding positions include serine 90–histidine 93 and arginine 112. The active-site Proton acceptor is histidine 91. Residue aspartate 113 participates in Mg(2+) binding. Glutamine 236 contacts substrate. Aspartate 264 lines the Mg(2+) pocket. A substrate-binding site is contributed by glutamate 308–glutamine 310. ATP contacts are provided by asparagine 493 and glycine 530. Asparagine 531 lines the Mg(2+) pocket. Serine 533 is a substrate binding site.

Belongs to the FGAMS family. As to quaternary structure, monomer. Part of the FGAM synthase complex composed of 1 PurL, 1 PurQ and 2 PurS subunits.

It localises to the cytoplasm. It catalyses the reaction N(2)-formyl-N(1)-(5-phospho-beta-D-ribosyl)glycinamide + L-glutamine + ATP + H2O = 2-formamido-N(1)-(5-O-phospho-beta-D-ribosyl)acetamidine + L-glutamate + ADP + phosphate + H(+). Its pathway is purine metabolism; IMP biosynthesis via de novo pathway; 5-amino-1-(5-phospho-D-ribosyl)imidazole from N(2)-formyl-N(1)-(5-phospho-D-ribosyl)glycinamide: step 1/2. Its function is as follows. Part of the phosphoribosylformylglycinamidine synthase complex involved in the purines biosynthetic pathway. Catalyzes the ATP-dependent conversion of formylglycinamide ribonucleotide (FGAR) and glutamine to yield formylglycinamidine ribonucleotide (FGAM) and glutamate. The FGAM synthase complex is composed of three subunits. PurQ produces an ammonia molecule by converting glutamine to glutamate. PurL transfers the ammonia molecule to FGAR to form FGAM in an ATP-dependent manner. PurS interacts with PurQ and PurL and is thought to assist in the transfer of the ammonia molecule from PurQ to PurL. In Novosphingobium aromaticivorans (strain ATCC 700278 / DSM 12444 / CCUG 56034 / CIP 105152 / NBRC 16084 / F199), this protein is Phosphoribosylformylglycinamidine synthase subunit PurL.